A 303-amino-acid polypeptide reads, in one-letter code: MGTPYHLGIDVGGTKVAFRVESGSACIEETSFSWGARHSAEDDLAQLAGHVARLRERIGTPLEAVGVAMPGTVGADGRVATWPSRPEWTGVDLKTALHSLFPEAAVAWADDGDLGALAESRASGCENLLYIGIGTGIGGGLVLGGVPCPGLGRGSFEIGHVIVEMGGVRCVCGRRGCLQALASGPATLRRASLLRGADVTYYRLQRALRNGEPWAADALEGSTRALAAAVTGVQELVHPDRVLIGGGFAAGIPEIVPSVSGFLADLVRQGQAPLPVEPAALGGLSSLRGAVALAGLVAAGEVP.

This sequence belongs to the ROK (NagC/XylR) family.

It catalyses the reaction kanosamine + ATP = D-kanosamine 6-phosphate + ADP + H(+). It functions in the pathway antibiotic biosynthesis; rifamycin B biosynthesis. With respect to regulation, inhibited by Zn(2+), Cu(2+), and Fe(2+). Functionally, involved in the biosynthesis of 3-amino-5-hydroxybenzoate (AHBA), a compound that then serves as the starter unit for the assembly of a polyketide during the biosynthesis of rifamycin B and other ansamycin antibiotics. Catalyzes only the phosphorylation of kanosamine to yield kanosamine 6-phosphate. This chain is Kanosamine kinase (rifN), found in Amycolatopsis mediterranei (strain S699) (Nocardia mediterranei).